The primary structure comprises 161 residues: Ferric uptake regulation protein 1 (161 aa).

Residues cysteine 94 and cysteine 97 each contribute to the Zn(2+) site.

This sequence belongs to the Fur family.

The protein localises to the cytoplasm. Functionally, acts as a global negative controlling element, employing Fe(2+) as a cofactor to bind the operator of the repressed genes. The chain is Ferric uptake regulation protein 1 (fur1) from Mycolicibacterium fortuitum (Mycobacterium fortuitum).